A 414-amino-acid polypeptide reads, in one-letter code: MALKKFLEDIEHHFEPGGKHEKWFALYEAVATVFYTPGLVTKKSSHVRDSVDLKRIMIMVWFAVFPAMFWGMYNAGGQAIAALNHMYAGDQLATVIAGNWHYWLTEMLGGSISADAGVGSKMLLGATYFLPIYATVFLVGGFWEVLFCMVRKHEVNEGFFVTSILFALIVPPTLPLWQAALGITFGVVVAKEIFGGTGRNFLNPALAGRAFLFFAYPAQISGDVVWTAADGFSGATALSQWAHGGSGALINNITGAPITWMDAFIGNIPGSIGEVSTLALMIGAAMIVYMRIASWRIIAGVMIGMIAVSTLFNVVGSDTNPMFNMPWHWHLVLGGFAFGMFFMATDPVSASFTNKGKWWYGILIGAMCVMIRVVNPAYPEGMMLAILFANLFAPLFDHVVIEKNIKRRLARYGK.

The next 4 helical transmembrane spans lie at 23–40 (WFAL…PGLV), 56–76 (IMIM…YNAG), 129–149 (FLPI…LFCM), and 164–184 (ILFA…LGIT). Threonine 236 carries the FMN phosphoryl threonine modification. A run of 5 helical transmembrane segments spans residues 268 to 288 (IPGS…AMIV), 297 to 317 (IIAG…VVGS), 325 to 345 (MPWH…FMAT), 358 to 378 (WWYG…NPAY), and 381 to 401 (GMML…HVVI).

It belongs to the NqrB/RnfD family. In terms of assembly, composed of six subunits; NqrA, NqrB, NqrC, NqrD, NqrE and NqrF. FMN is required as a cofactor.

The protein localises to the cell inner membrane. It carries out the reaction a ubiquinone + n Na(+)(in) + NADH + H(+) = a ubiquinol + n Na(+)(out) + NAD(+). Functionally, NQR complex catalyzes the reduction of ubiquinone-1 to ubiquinol by two successive reactions, coupled with the transport of Na(+) ions from the cytoplasm to the periplasm. NqrA to NqrE are probably involved in the second step, the conversion of ubisemiquinone to ubiquinol. The chain is Na(+)-translocating NADH-quinone reductase subunit B from Vibrio parahaemolyticus serotype O3:K6 (strain RIMD 2210633).